The following is a 238-amino-acid chain: Histidine/lysine/arginine/ornithine transport system permease protein HisM (238 aa).

Over 1 to 26 (MIEILHEYWKPLLWTDGYRFTGVAIT) the chain is Periplasmic. In terms of domain architecture, ABC transmembrane type-1 spans 23-221 (VAITLWLLIL…IISYVLISLF (199 aa)). A helical transmembrane segment spans residues 27–47 (LWLLILSVVIGGVLALFLAIG). Topologically, residues 48-58 (RVSSNKYIQFP) are cytoplasmic. Residues 59 to 79 (IWLFTYIFRGTPLYVQLLVFY) form a helical membrane-spanning segment. Residues 80 to 104 (SGMYTLEIVKGTEFLNAFFRSGLNC) are Periplasmic-facing. A helical transmembrane segment spans residues 105-125 (TVLALTLNTCAYTTEIFAGAI). Topologically, residues 126–157 (RSVPHGEIEAARAYGFSTFKMYRCIILPSALR) are cytoplasmic. The chain crosses the membrane as a helical span at residues 158-178 (IALPAYSNEVILMLHSTALAF). At 179–199 (TATVPDLLKIARDINAATYQP) the chain is on the periplasmic side. A helical membrane pass occupies residues 200–220 (FTAFGIAAVLYLIISYVLISL). At 221–238 (FRRAEKRWLQHVKPSSTH) the chain is on the cytoplasmic side.

It belongs to the binding-protein-dependent transport system permease family. HisMQ subfamily. The HisPMQJ complex is composed of two ATP-binding proteins (HisP), two transmembrane proteins (HisM and HisQ) and a solute-binding protein (HisJ). The HisPMQ-ArgT complex is composed of two ATP-binding proteins (HisP), two transmembrane proteins (HisM and HisQ) and a solute-binding protein (ArgT).

It localises to the cell inner membrane. Its function is as follows. Part of the ABC transporter complex HisPMQJ involved in histidine transport. Is also part of the ABC transporter complex HisPMQ-ArgT involved in lysine/arginine/ornithine transport. Probably responsible for the translocation of the substrate across the membrane. The chain is Histidine/lysine/arginine/ornithine transport system permease protein HisM (hisM) from Escherichia coli O157:H7.